Here is a 266-residue protein sequence, read N- to C-terminus: GRIP and coiled-coil domain-containing protein C365.11 (266 aa).

Polar residues predominate over residues 1–13 (METTVSAKNSLEN). Residues 1–88 (METTVSAKNS…LDEKVKELEN (88 aa)) are disordered. At Ser10 the chain carries Phosphoserine. The segment covering 36 to 49 (ASKKKRKNRKKKKN) has biased composition (basic residues). Basic and acidic residues predominate over residues 63 to 88 (EEQRSGSIDSKDKEKPLDEKVKELEN). Residues 73–188 (KDKEKPLDEK…ESVKSHESEL (116 aa)) are a coiled coil. Residues Ser202 and Ser204 each carry the phosphoserine modification. The GRIP domain maps to 216 to 264 (ISKELINKEYARNVLLQFLENHEHRDKILPILSTALDLEEVHQHLILKN).

It is found in the cytoplasm. The polypeptide is GRIP and coiled-coil domain-containing protein C365.11 (Schizosaccharomyces pombe (strain 972 / ATCC 24843) (Fission yeast)).